Here is a 134-residue protein sequence, read N- to C-terminus: MTLNIRIIAPDRTVWDAEAQEIILPSSTGQLGILTGHAPLLTALDIGVMRVRVDKEWMPIVLLGGFAEIENNQLTILVNGAEEASQIDLVEAEKNLDTATQLLNDASSSKEKIEATQNIRKARARVQAATAASA.

Belongs to the ATPase epsilon chain family. F-type ATPases have 2 components, CF(1) - the catalytic core - and CF(0) - the membrane proton channel. CF(1) has five subunits: alpha(3), beta(3), gamma(1), delta(1), epsilon(1). CF(0) has three main subunits: a, b and c.

It localises to the plastid. The protein localises to the chloroplast thylakoid membrane. Functionally, produces ATP from ADP in the presence of a proton gradient across the membrane. This Porphyra purpurea (Red seaweed) protein is ATP synthase epsilon chain, chloroplastic.